The sequence spans 319 residues: Transcription initiation factor IIB 6 (319 aa).

Over residues 1–16 the composition is skewed to basic and acidic residues; that stretch reads MTDARMRSREQERTDE. The tract at residues 1–33 is disordered; sequence MTDARMRSREQERTDETESESTDGCPECGGLVV. A TFIIB-type zinc finger spans residues 21 to 51; sequence STDGCPECGGLVVNDEEHGESVCADCGLVVE. Residues Cys-25, Cys-28, Cys-43, and Cys-46 each contribute to the Zn(2+) site. Residues 59-74 are compositionally biased toward basic and acidic residues; sequence PEWRAFDSKEKDEKSR. Residues 59-89 are disordered; sequence PEWRAFDSKEKDEKSRVGAPTTNTMHDKGLS. Repeat copies occupy residues 137–220 and 231–312.

Belongs to the TFIIB family.

In terms of biological role, stabilizes TBP binding to an archaeal box-A promoter. Also responsible for recruiting RNA polymerase II to the pre-initiation complex (DNA-TBP-TFIIB). The sequence is that of Transcription initiation factor IIB 6 from Halobacterium salinarum (strain ATCC 700922 / JCM 11081 / NRC-1) (Halobacterium halobium).